Here is a 533-residue protein sequence, read N- to C-terminus: Beta-1,4 N-acetylgalactosaminyltransferase 1 (533 aa).

The Cytoplasmic segment spans residues M1–A7. Residues L8–A25 form a helical; Signal-anchor for type II membrane protein membrane-spanning segment. Over S26–E533 the chain is Lumenal. 2 N-linked (GlcNAc...) asparagine glycosylation sites follow: N79 and N274. A disulfide bond links C429 and C476.

Belongs to the glycosyltransferase 2 family. As to quaternary structure, homodimer; disulfide-linked. Strongly expressed in brain, testis, spleen, and to a lesser extent in liver.

The protein resides in the golgi apparatus membrane. The enzyme catalyses a ganglioside GM3 (d18:1(4E)) + UDP-N-acetyl-alpha-D-galactosamine = a ganglioside GM2 (d18:1(4E)) + UDP + H(+). It carries out the reaction a ganglioside GD3 (d18:1(4E)) + UDP-N-acetyl-alpha-D-galactosamine = a ganglioside GD2 (d18:1(4E)) + UDP + H(+). The catalysed reaction is a ganglioside GM3 + UDP-N-acetyl-alpha-D-galactosamine = a ganglioside GM2 + UDP + H(+). It catalyses the reaction a ganglioside GD3 + UDP-N-acetyl-alpha-D-galactosamine = a ganglioside GD2 + UDP + H(+). The enzyme catalyses a ganglioside GD1a + UDP-N-acetyl-alpha-D-galactosamine = a ganglioside GalNAc-GD1a + UDP + H(+). It carries out the reaction a ganglioside GT3 (d18:1(4E)) + UDP-N-acetyl-alpha-D-galactosamine = a ganglioside GT2 (d18:1(4E)) + UDP + H(+). The catalysed reaction is a beta-D-Gal-(1-&gt;4)-beta-D-Glc-(1&lt;-&gt;1)-Cer(d18:1(4E)) + UDP-N-acetyl-alpha-D-galactosamine = a ganglioside GA2 (d18:1(4E)) + UDP + H(+). It catalyses the reaction a neolactoside IV(3)-alpha-NeuGc-nLc4Cer + UDP-N-acetyl-alpha-D-galactosamine = a neolactoside IV(4)-beta-GalNAc-IV(3)-alpha-NeuGc-nLc4Cer + UDP + H(+). It participates in sphingolipid metabolism. Its function is as follows. Involved in the biosynthesis of gangliosides GM2, GD2, GT2 and GA2 from GM3, GD3, GT3 and GA3, respectively. This Rattus norvegicus (Rat) protein is Beta-1,4 N-acetylgalactosaminyltransferase 1.